The following is a 922-amino-acid chain: NEDD4-like E3 ubiquitin-protein ligase WWP1 (922 aa).

One can recognise a C2 domain in the interval 1–116 (MATASPRSDT…IHNRKLERVK (116 aa)). 5 stretches are compositionally biased toward polar residues: residues 210 to 219 (GDNTPSSPSQ), 243 to 278 (NGES…STTV), 286 to 302 (ILTS…TSAE), 314 to 323 (DTSNSRSSSA), and 340 to 351 (RQQSGNANTETL). Residues 210 to 388 (GDNTPSSPSQ…RPQPLPPGWE (179 aa)) form a disordered region. 4 WW domains span residues 349-382 (ETLP…RPQP), 381-414 (QPLP…RPTM), 456-489 (GPLP…DPRT), and 496-529 (EPLP…DPRN). The interval 349–531 (ETLPSGWEQR…TTFKDPRNGK (183 aa)) is required for interaction with and ubiquitination of AMOTL2. Required for interaction with YAP1. Positions 588–922 (KPYDLRRRLY…IEETEGFGQE (335 aa)) constitute an HECT domain. Catalysis depends on C890, which acts as the Glycyl thioester intermediate.

As to quaternary structure, interacts with the Crumbs complex components PALS1 and PATJ; interaction with the Crumbs complex is enhanced by WWP1's interaction with AMOTL2 and facilitates WWP1 localization to the plasma membrane. Interaction with the Crumbs complex promotes WWP1 monoubiquitination of AMOTL2, which activates the Hippo signaling pathway. Binds KLF2 and HIVEP3. Binds SCNN1A, SCNN1B, SCNN1G, WBP1, WBP2, DRPLA and adenovirus type 2 PIII. Interacts with RNF11. Interacts with SPART. Interacts with ERBB4 isoforms JM-B CYT-1 and JM-A CYT-1. Interacts with SMAD1, SMAD2, SMAD3, SMAD5, SMAD6, SMAD7, TGFBR1 and TGFBR2. Associates with the TGFBR1:TGFBR2 receptor complex in presence of SMAD7. Interacts with SKIL isoform 1. Interacts with TP63 isoform 1 and isoform 2. Interacts with STAMBP and RNF11. Interacts with NDFIP1 and NDFIP2; this interaction activates the E3 ubiquitin-protein ligase. Interacts with TGIF. Interacts (via WW domains) with ARRDC1, ARRDC2 and ARRDC3. (Microbial infection) Interacts with HTLV-1 protein Gag. In terms of assembly, (Microbial infection) Interacts with ebola virus protein VP40. Post-translationally, auto-ubiquitinated and ubiquitinated by RNF11. As to expression, detected in heart, placenta, pancreas, kidney, liver, skeletal muscle, bone marrow, fetal brain, and at much lower levels in adult brain and lung. Isoform 1 and isoform 5 predominate in all tissues tested, except in testis and bone marrow, where isoform 5 is expressed at much higher levels than isoform 1.

The protein localises to the cytoplasm. It is found in the cell membrane. Its subcellular location is the nucleus. It localises to the cell junction. It catalyses the reaction S-ubiquitinyl-[E2 ubiquitin-conjugating enzyme]-L-cysteine + [acceptor protein]-L-lysine = [E2 ubiquitin-conjugating enzyme]-L-cysteine + N(6)-ubiquitinyl-[acceptor protein]-L-lysine.. The protein operates within protein modification; protein ubiquitination. With respect to regulation, activated by NDFIP1- and NDFIP2-binding. Its function is as follows. E3 ubiquitin-protein ligase which accepts ubiquitin from an E2 ubiquitin-conjugating enzyme in the form of a thioester and then directly transfers the ubiquitin to targeted substrates. Ubiquitinates ERBB4 isoforms JM-A CYT-1 and JM-B CYT-1, KLF2, KLF5 and TP63 and promotes their proteasomal degradation. Ubiquitinates RNF11 without targeting it for degradation. Ubiquitinates and promotes degradation of TGFBR1; the ubiquitination is enhanced by SMAD7. Ubiquitinates SMAD6 and SMAD7. Ubiquitinates and promotes degradation of SMAD2 in response to TGF-beta signaling, which requires interaction with TGIF. Activates the Hippo signaling pathway in response to cell contact inhibition and recruitment to the Crumbs complex at the cell membrane. Monoubiquitinates AMOTL2 which facilitates its interaction with and activation of LATS2. LATS2 then phosphorylates YAP1, excluding it from the nucleus and therefore ultimately represses YAP1-driven transcription of target genes. The polypeptide is NEDD4-like E3 ubiquitin-protein ligase WWP1 (WWP1) (Homo sapiens (Human)).